The chain runs to 178 residues: Large ribosomal subunit protein eL20y (178 aa).

The protein belongs to the eukaryotic ribosomal protein eL20 family.

This chain is Large ribosomal subunit protein eL20y (RPL18AB), found in Arabidopsis thaliana (Mouse-ear cress).